The sequence spans 291 residues: Regulator of rDNA transcription protein 5 (291 aa).

Residues K21–P104 enclose the RRM 1 domain. The interval A109–K151 is disordered. The RRM 2 domain occupies D152–L235. Residues H271 to A291 form a disordered region.

The protein belongs to the RRT5 family.

In terms of biological role, may be involved in the modulation of rDNA transcription. The chain is Regulator of rDNA transcription protein 5 (RRT5) from Lachancea thermotolerans (strain ATCC 56472 / CBS 6340 / NRRL Y-8284) (Yeast).